We begin with the raw amino-acid sequence, 395 residues long: MAERHLFTSESVSEGHPDKIADQISDAILDELLKKDPDSRVAVETSVTTGLVLVFGEVSTKAYVNIQQIVRDTIRKIGYTDGKYGFDADNCAVITAIDEQSPDIAQGVDDSLETREGEADPLDKIGAGDQGLMFGYATDETPEYMPLTLVLSHKLMRKIAQLRKDGVISYLRPDAKAEVTVEYDENDKPLRVDTVVLSTQHDPEVSLDQIKKDIKEQVIEAVIPAEYLDDQTKYFINPTGRFVIGGPQGDAGLTGRKIIVDTYGGAAHHGGGAFSGKDATKVDRSASYAARYIAKNIVAAGYAKKAEIQVAYAIGVAEPVSIMINTYGTGTRSEEELIAAVRKAFDLRPAGIIEMLDLKRPIYKQTAAYGHFGRTDVDLPWEHLDKVDELKEILG.

Histidine 16 provides a ligand contact to ATP. Aspartate 18 is a Mg(2+) binding site. Residue glutamate 44 participates in K(+) binding. L-methionine is bound by residues glutamate 57 and glutamine 100. The interval 100-110 (QSPDIAQGVDD) is flexible loop. Residues 174 to 176 (DAK), 241 to 242 (RF), aspartate 250, 256 to 257 (RK), alanine 273, and lysine 277 each bind ATP. L-methionine is bound at residue aspartate 250. Lysine 281 provides a ligand contact to L-methionine.

Belongs to the AdoMet synthase family. As to quaternary structure, homotetramer; dimer of dimers. Mg(2+) is required as a cofactor. It depends on K(+) as a cofactor.

It is found in the cytoplasm. The catalysed reaction is L-methionine + ATP + H2O = S-adenosyl-L-methionine + phosphate + diphosphate. It functions in the pathway amino-acid biosynthesis; S-adenosyl-L-methionine biosynthesis; S-adenosyl-L-methionine from L-methionine: step 1/1. Functionally, catalyzes the formation of S-adenosylmethionine (AdoMet) from methionine and ATP. The overall synthetic reaction is composed of two sequential steps, AdoMet formation and the subsequent tripolyphosphate hydrolysis which occurs prior to release of AdoMet from the enzyme. The polypeptide is S-adenosylmethionine synthase (Limosilactobacillus reuteri (strain DSM 20016) (Lactobacillus reuteri)).